The sequence spans 416 residues: Protein-glutamine gamma-glutamyltransferase (416 aa).

A signal peptide (tat-type signal) is located at residues methionine 1 to alanine 29. Positions alanine 30–alanine 85 are excised as a propeptide. A disordered region spans residues threonine 64 to glutamate 103. The span at proline 76–alanine 85 shows a compositional bias: low complexity. The segment covering proline 86–glutamate 103 has biased composition (basic and acidic residues). Cysteine 149 is an active-site residue. The interval glycine 290–lysine 331 is disordered. Positions glycine 295–arginine 309 are enriched in basic and acidic residues. Residues aspartate 340 and histidine 359 contribute to the active site.

This sequence belongs to the bacterial TGase family. Predicted to be exported by the Tat system. The position of the signal peptide cleavage has not been experimentally proven.

The enzyme catalyses L-glutaminyl-[protein] + L-lysyl-[protein] = [protein]-L-lysyl-N(6)-5-L-glutamyl-[protein] + NH4(+). Its function is as follows. Catalyzes the cross-linking of proteins and the conjugation of polyamines to proteins. The protein is Protein-glutamine gamma-glutamyltransferase of Streptomyces cinnamoneus (Streptoverticillium cinnamoneum).